The sequence spans 109 residues: U-scoloptoxin(16)-Cw1a (109 aa).

A signal peptide spans 1-21; the sequence is MNAVFIVFLSAILSYPHESFA.

Belongs to the scoloptoxin-16 family. Contains 4 disulfide bonds. As to expression, expressed by the venom gland.

The protein resides in the secreted. This Cormocephalus westwoodi (Westwood's green centipede) protein is U-scoloptoxin(16)-Cw1a.